The chain runs to 178 residues: Caveolin-1 (178 aa).

Ser2 is subject to N-acetylserine. Ser2 bears the Phosphoserine mark. Residues 2-94 (SGGKYVDSEG…WKASFTTFTV (93 aa)) form a required for homooligomerization region. The Cytoplasmic segment spans residues 2-104 (SGGKYVDSEG…TKYWFYRLLS (103 aa)). Residue Lys5 is modified to N6-acetyllysine; alternate. Residue Lys5 forms a Glycyl lysine isopeptide (Lys-Gly) (interchain with G-Cter in ubiquitin); alternate linkage. A Phosphotyrosine modification is found at Tyr6. Ser9 is subject to Phosphoserine. Tyr14 is subject to Phosphotyrosine; by ABL1. Phosphotyrosine is present on Tyr25. Residues Lys26, Lys30, Lys39, Lys47, and Lys57 each participate in a glycyl lysine isopeptide (Lys-Gly) (interchain with G-Cter in ubiquitin) cross-link. Positions 82–94 (DGIWKASFTTFTV) are interaction with CAVIN3. The segment at residues 105-125 (ALFGIPMALIWGIYFAILSFL) is an intramembrane region (helical). Over 126-178 (HIWAVVPCIKSFLIEIQCISRVYSIYVHTFCDPLFEAIGKIFSNIRINTQKEI) the chain is Cytoplasmic. Positions 131 to 142 (VPCIKSFLIEIQ) are interacts with SPRY1, SPRY2, SPRY3 and SPRY4. Residues Cys133, Cys143, and Cys156 are each lipidated (S-palmitoyl cysteine). The segment at 149 to 160 (SIYVHTFCDPLF) is interacts with SPRY1, SPRY2, and SPRY4. Residues 167 to 178 (FSNIRINTQKEI) form an interacts with SPRY1, SPRY2, SPRY3 and SPRY4 region.

Belongs to the caveolin family. In terms of assembly, homooligomer. Interacts with GLIPR2. Interacts with NOSTRIN. Interacts with SNAP25 and STX1A. Interacts (via the N-terminus) with DPP4; the interaction is direct. Interacts with CTNNB1, CDH1 and JUP. Interacts with PACSIN2; this interaction induces membrane tubulation. Interacts with SLC7A9. Interacts with BMX and BTK. Interacts with TGFBR1. Interacts with CAVIN3 (via leucine-zipper domain) in a cholesterol-sensitive manner. Interacts with CAVIN1. Interacts with EHD2 in a cholesterol-dependent manner. Forms a ternary complex with UBXN6 and VCP; mediates CAV1 targeting to lysosomes for degradation. Interacts with ABCG1; this interaction regulates ABCG1-mediated cholesterol efflux. Interacts with NEU3; this interaction enhances NEU3 sialidase activity within caveola. Interacts (via C-terminus) with SPRY1, SPRY2 (via C-terminus), SPRY3, and SPRY4. Interacts with IGFBP5; this interaction allows trafficking of IGFBP5 from the plasma membrane to the nucleus. In terms of processing, phosphorylated at Tyr-14 by ABL1 in response to oxidative stress. Ubiquitinated. Undergo monoubiquitination and multi- and/or polyubiquitination. Monoubiquitination of N-terminal lysines promotes integration in a ternary complex with UBXN6 and VCP which promotes oligomeric CAV1 targeting to lysosomes for degradation. Ubiquitinated by ZNRF1; leading to degradation and modulation of the TLR4-mediated immune response.

It is found in the golgi apparatus membrane. The protein localises to the cell membrane. The protein resides in the membrane. It localises to the caveola. Its subcellular location is the membrane raft. Its function is as follows. May act as a scaffolding protein within caveolar membranes. Forms a stable heterooligomeric complex with CAV2 that targets to lipid rafts and drives caveolae formation. Mediates the recruitment of CAVIN proteins (CAVIN1/2/3/4) to the caveolae. Interacts directly with G-protein alpha subunits and can functionally regulate their activity. Involved in the costimulatory signal essential for T-cell receptor (TCR)-mediated T-cell activation. Its binding to DPP4 induces T-cell proliferation and NF-kappa-B activation in a T-cell receptor/CD3-dependent manner. Recruits CTNNB1 to caveolar membranes and may regulate CTNNB1-mediated signaling through the Wnt pathway. Negatively regulates TGFB1-mediated activation of SMAD2/3 by mediating the internalization of TGFBR1 from membrane rafts leading to its subsequent degradation. Binds 20(S)-hydroxycholesterol (20(S)-OHC). The sequence is that of Caveolin-1 (CAV1) from Bos taurus (Bovine).